Here is a 256-residue protein sequence, read N- to C-terminus: UPF0644 protein PB2B4.06 (256 aa).

Residues 34–56 (GVVYAGVSGTCAAAGYMFGNFVM) traverse the membrane as a helical segment.

The protein belongs to the UPF0644 family.

Its subcellular location is the mitochondrion membrane. The chain is UPF0644 protein PB2B4.06 from Schizosaccharomyces pombe (strain 972 / ATCC 24843) (Fission yeast).